A 450-amino-acid polypeptide reads, in one-letter code: Probable glucoamylase (450 aa).

A signal peptide spans Met-1–Ala-16. The propeptide occupies Glu-17 to Glu-28. Residue Trp-147 coordinates substrate. Catalysis depends on Asp-203, which acts as the Proton acceptor. Glu-206 acts as the Proton donor in catalysis. Asn-383 and Asn-409 each carry an N-linked (GlcNAc...) asparagine glycan.

This sequence belongs to the glycosyl hydrolase 15 family.

It catalyses the reaction Hydrolysis of terminal (1-&gt;4)-linked alpha-D-glucose residues successively from non-reducing ends of the chains with release of beta-D-glucose.. The chain is Probable glucoamylase (meu17) from Schizosaccharomyces pombe (strain 972 / ATCC 24843) (Fission yeast).